Here is a 146-residue protein sequence, read N- to C-terminus: uncharacterized protein (146 aa).

This is an uncharacterized protein from Escherichia coli (strain K12).